We begin with the raw amino-acid sequence, 432 residues long: Tyrosine-protein phosphatase non-receptor type 1 (432 aa).

The residue at position 1 (M1) is an N-acetylmethionine. The 275-residue stretch at 3-277 folds into the Tyrosine-protein phosphatase domain; that stretch reads MEKEFEQIDK…RFSYLAVIEG (275 aa). Phosphotyrosine is present on Y20. S50 carries the phosphoserine; by PKB/AKT1, CLK1 and CLK2 modification. The residue at position 66 (Y66) is a Phosphotyrosine; by EGFR. Substrate is bound by residues D181 and 215-221; that span reads CSAGIGR. The active-site Phosphocysteine intermediate is the C215. Cysteine persulfide is present on C215. Residue C215 is modified to S-nitrosocysteine; in reversibly inhibited form. Residues S242 and S243 each carry the phosphoserine; by CLK1 and CLK2 modification. Q262 serves as a coordination point for substrate. The segment at 297-322 is disordered; the sequence is EDLEPPPEHVPPPPRPPKRTLEPHNG. Residues S335, S362, and S364 each carry the phosphoserine modification. The segment at 350–402 is disordered; the sequence is SRAPSIAVHSMSSMSQDTEVRKRMVGGGLQSAQASVPTEEELSPTEEEQKAHR. A Phosphothreonine modification is found at T367.

Belongs to the protein-tyrosine phosphatase family. Non-receptor class 1 subfamily. In terms of assembly, interacts with EPHA3 (phosphorylated); dephosphorylates EPHA3 and may regulate its trafficking and function. Interacts with MET. Interacts with NCK1. Ser-50 is the major site of phosphorylation as compared to Ser-242 and Ser-243. Activated by phosphorylation at Ser-50. Post-translationally, S-nitrosylation of Cys-215 inactivates the enzyme activity. In terms of processing, sulfhydration at Cys-215 following endoplasmic reticulum stress inactivates the enzyme activity, promoting EIF2AK3/PERK activity. In terms of tissue distribution, found in several tissues including central nervous system, liver and kidney. A high level of expression was found in the hippocampus.

It localises to the endoplasmic reticulum membrane. It catalyses the reaction O-phospho-L-tyrosyl-[protein] + H2O = L-tyrosyl-[protein] + phosphate. Its function is as follows. Tyrosine-protein phosphatase which acts as a regulator of endoplasmic reticulum unfolded protein response. Mediates dephosphorylation of EIF2AK3/PERK; inactivating the protein kinase activity of EIF2AK3/PERK. May play an important role in CKII- and p60c-src-induced signal transduction cascades. May regulate the EFNA5-EPHA3 signaling pathway which modulates cell reorganization and cell-cell repulsion. May also regulate the hepatocyte growth factor receptor signaling pathway through dephosphorylation of MET. The polypeptide is Tyrosine-protein phosphatase non-receptor type 1 (Ptpn1) (Rattus norvegicus (Rat)).